Here is a 398-residue protein sequence, read N- to C-terminus: Phospholipase C (398 aa).

A signal peptide spans 1-26 (MKALKKVSNILCVLGLCTLMGGTSYA). W27, H37, D82, H94, H152, D156, H162, H174, and E178 together coordinate Zn(2+). In terms of domain architecture, Zn-dependent PLC spans 27 to 276 (WDGKKDGTGT…NEVSNGNTGD (250 aa)). The tract at residues 273–281 (NTGDNDSLT) is linker. Residues 282–398 (NEFNIVLKTA…TGNETYYINK (117 aa)) form the PLAT domain. G297, T298, D299, D319, N320, G322, N323, D324, and D363 together coordinate Ca(2+).

Belongs to the bacterial zinc-metallophospholipase C family. It depends on Ca(2+) as a cofactor. Zn(2+) serves as cofactor.

The protein resides in the secreted. The enzyme catalyses a 1,2-diacyl-sn-glycero-3-phosphocholine + H2O = phosphocholine + a 1,2-diacyl-sn-glycerol + H(+). Functionally, bacterial hemolysins are exotoxins that attack blood cell membranes and cause cell rupture. Binds to eukaryotic membranes where it hydrolyzes phosphatidylcholine. This enzyme has 10-fold less activity towards sphingomyelin than its C.perfringens counterpart, is approximately 100-fold less hemolytic against mouse erythrocytes and at least 100-fold less toxic in mice. This is Phospholipase C (plc) from Paraclostridium bifermentans (Clostridium bifermentans).